Here is a 447-residue protein sequence, read N- to C-terminus: Voltage-gated purine nucleotide uniporter SLC17A9 (447 aa).

The interval 1-26 (MPSQRSSLMQPIPEETRKTPSAAAED) is disordered. A compositionally biased stretch (basic and acidic residues) spans 14–26 (EETRKTPSAAAED). A run of 11 helical transmembrane segments spans residues 36-58 (LWTG…MPVC), 74-94 (GIVL…GGHL), 103-123 (VILL…LLAH), 129-149 (LAFV…YFPA), 169-189 (TVGA…SVLL), 197-217 (VFYF…KYLL), 252-272 (VWAV…LLSW), 287-307 (WVFN…SGFI), 327-347 (VMGL…TSFL), 380-400 (GFLF…GVCL), and 413-433 (CVFH…LVFG).

It belongs to the major facilitator superfamily. Sodium/anion cotransporter family.

It is found in the cytoplasmic vesicle. It localises to the secretory vesicle. The protein localises to the chromaffin granule membrane. Its subcellular location is the secretory vesicle membrane. The protein resides in the lysosome membrane. The enzyme catalyses ATP(in) = ATP(out). The catalysed reaction is ADP(in) = ADP(out). It carries out the reaction GTP(in) = GTP(out). With respect to regulation, activity is chloride-dependent. Functionally, voltage-gated ATP nucleotide uniporter that can also transport the purine nucleotides ADP and GTP. Uses the membrane potential as the driving force to control ATP accumulation in lysosomes and secretory vesicles. By controlling ATP storage in lysosomes, regulates ATP-dependent proteins of these organelles. Also indirectly regulates the exocytosis of ATP through its import into lysosomes in astrocytes and secretory vesicles such as adrenal chromaffin granules, mucin granules and synaptic vesicles. The protein is Voltage-gated purine nucleotide uniporter SLC17A9 of Rattus norvegicus (Rat).